Consider the following 430-residue polypeptide: FAD-dependent monooxygenase asL4 (430 aa).

FAD is bound by residues 11-14 (GGIA), 33-34 (ER), Arg108, and Tyr278.

It belongs to the aromatic-ring hydroxylase family. The cofactor is FAD.

Its pathway is secondary metabolite biosynthesis; terpenoid biosynthesis. In terms of biological role, flavin-dependent monooxygenase; part of the gene cluster that mediates the biosynthesis of xenovulene A, an unusual meroterpenoid that has potent inhibitory effects on the human gamma-aminobutyrate A (GABAA) benzodiazepine receptor. The first step of xenovulene A biosynthesis is the biosynthesis of 3-methylorcinaldehyde performed by the non-reducing polyketide synthase aspks1. The salicylate hydroxylase asL1 then catalyzes the oxidative dearomatization of 3-methylorcinaldehyde to yield a dearomatized hydroxycyclohexadione. The 2-oxoglutarate-dependent dioxygenase asL3 further catalyzes the oxidative ring expansion to provide the first tropolone metabolite. The cytochrome P450 monooxygenase asR2 allows the synthesis of tropolone hemiacetal. In parallel, a previously unrecognised class of terpene cyclase, asR6, produces alpha-humulene from farnesylpyrophosphate (FPP). The putative Diels-Alderase asR5 probably catalyzes the formation of the tropolone-humulene skeleton by linking humulene and the polyketide moiety. Oxidative-ring contractions catalyzed by asL4 and asL6 then processively remove carbon atoms from the polyketide to yield xenovulene A. This Sarocladium schorii (Acremonium strictum (strain IMI 501407)) protein is FAD-dependent monooxygenase asL4.